We begin with the raw amino-acid sequence, 205 residues long: Dihydrofolate reductase (205 aa).

Residues methionine 1 to lysine 201 form the DHFR domain. Residues alanine 7 and glycine 13–alanine 19 contribute to the NADP(+) site. Aspartate 29–arginine 34 contacts substrate. An NADP(+)-binding site is contributed by arginine 62–threonine 64. A substrate-binding site is contributed by arginine 78. Residues serine 84–glycine 86 and glycine 118–leucine 125 each bind NADP(+).

The protein belongs to the dihydrofolate reductase family.

It carries out the reaction (6S)-5,6,7,8-tetrahydrofolate + NADP(+) = 7,8-dihydrofolate + NADPH + H(+). Its pathway is cofactor biosynthesis; tetrahydrofolate biosynthesis; 5,6,7,8-tetrahydrofolate from 7,8-dihydrofolate: step 1/1. Key enzyme in folate metabolism. Catalyzes an essential reaction for de novo glycine and purine synthesis, and for DNA precursor synthesis. In Encephalitozoon cuniculi (strain GB-M1) (Microsporidian parasite), this protein is Dihydrofolate reductase (DHFR-1).